A 526-amino-acid polypeptide reads, in one-letter code: Glucose-6-phosphate isomerase (526 aa).

The Proton donor role is filled by Glu-320. Active-site residues include His-349 and Lys-453.

This sequence belongs to the GPI family.

The protein localises to the cytoplasm. The catalysed reaction is alpha-D-glucose 6-phosphate = beta-D-fructose 6-phosphate. It participates in carbohydrate biosynthesis; gluconeogenesis. It functions in the pathway carbohydrate degradation; glycolysis; D-glyceraldehyde 3-phosphate and glycerone phosphate from D-glucose: step 2/4. Catalyzes the reversible isomerization of glucose-6-phosphate to fructose-6-phosphate. The chain is Glucose-6-phosphate isomerase from Gloeothece citriformis (strain PCC 7424) (Cyanothece sp. (strain PCC 7424)).